We begin with the raw amino-acid sequence, 289 residues long: Oxaloacetate decarboxylase (289 aa).

Residue serine 47 coordinates substrate. A Mg(2+)-binding site is contributed by aspartate 85. The substrate site is built by arginine 156 and histidine 232.

The protein belongs to the isocitrate lyase/PEP mutase superfamily. Oxaloacetate decarboxylase family. In terms of assembly, homotetramer; dimer of dimers. Mg(2+) serves as cofactor.

The catalysed reaction is oxaloacetate + H(+) = pyruvate + CO2. In terms of biological role, catalyzes the decarboxylation of oxaloacetate into pyruvate. Seems to play a role in maintaining cellular concentrations of bicarbonate and pyruvate. The chain is Oxaloacetate decarboxylase from Rhodopseudomonas palustris (strain BisA53).